Reading from the N-terminus, the 144-residue chain is Large ribosomal subunit protein uL15 (144 aa).

Positions M1 to Q54 are disordered. 2 stretches are compositionally biased toward gly residues: residues R21 to A31 and S42 to G52.

Belongs to the universal ribosomal protein uL15 family. Part of the 50S ribosomal subunit.

Binds to the 23S rRNA. This chain is Large ribosomal subunit protein uL15, found in Shewanella baltica (strain OS223).